The sequence spans 1024 residues: Peroxisomal ATPase PEX6 (1024 aa).

759–766 (GPPGTGKT) provides a ligand contact to ATP.

It belongs to the AAA ATPase family. In terms of assembly, interacts with PEX1; forming the PEX1-PEX6 AAA ATPase complex, which is composed of a heterohexamer formed by a trimer of PEX1-PEX6 dimers.

Its subcellular location is the cytoplasm. The protein localises to the cytosol. It localises to the peroxisome membrane. The enzyme catalyses ATP + H2O = ADP + phosphate + H(+). Functionally, component of the PEX1-PEX6 AAA ATPase complex, a protein dislocase complex that mediates the ATP-dependent extraction of the PEX5 receptor from peroxisomal membranes, an essential step for PEX5 recycling. Specifically recognizes PEX5 monoubiquitinated at 'Cys-6', and pulls it out of the peroxisome lumen through the PEX2-PEX10-PEX12 retrotranslocation channel. Extraction by the PEX1-PEX6 AAA ATPase complex is accompanied by unfolding of the TPR repeats and release of bound cargo from PEX5. This chain is Peroxisomal ATPase PEX6 (PEX6), found in Yarrowia lipolytica (strain CLIB 122 / E 150) (Yeast).